The primary structure comprises 175 residues: MDGLSFVDKGKIPDGYKNEIDQLVKKEFANIKREPVHPEIRGILAKRKGADNSVSTLTNALYTEYLKQRNNKKRRTPDFNDDDDTLFLEEYRRKYPRIDTSRYIPNESSEVSLLGIVDSYLKHQEIVLDTLLPQTVSNQWRINNDYIRQTCTIVEEMNIQQRKQINDLEIYRKRL.

In terms of assembly, belongs to the NTC complex (or PRP19-associated complex), composed of at least CEF1, CLF1, ISY1, NTC20, SNT309, SYF1, SYF2, and PRP19. The NTC complex associates with the spliceosome after the release of the U1 and U4 snRNAs and forms the CWC spliceosome subcomplex (or CEF1-associated complex) reminiscent of a late-stage spliceosome composed also of the U2, U5 and U6 snRNAs and at least BUD13, BUD31, BRR2, CDC40, CUS1, CWC2, CWC15, CWC21, CWC22, CWC23, CWC24, CWC25, CWC27, ECM2, HSH155, IST3, LEA1, MSL1, PRP8, PRP9, PRP11, PRP21, PRP22, PRP45, PRP46, SLU7, SMB1, SMD1, SMD2, SMD3, SMX2, SMX3, SNU114, SPP2, RSE1 and YJU2. Interacts with PRP19.

It is found in the nucleus. Its function is as follows. Involved in pre-mRNA splicing by stabilizing the NTC (or PRP19-associated complex). As a component of the NTC complex, associates to the spliceosome to mediate conformational rearrangement or to stabilize the structure of the spliceosome after U4 snRNA dissociation, which leads to spliceosome maturation. This is Pre-mRNA-splicing factor SNT309 (SNT309) from Saccharomyces cerevisiae (strain ATCC 204508 / S288c) (Baker's yeast).